Here is a 905-residue protein sequence, read N- to C-terminus: DNA mismatch repair protein MutS (905 aa).

The interval 1 to 95 (MELSLQGSLF…PAWGHHSQLK (95 aa)) is disordered. Residues 38 to 50 (NLSDADLSKDALA) are compositionally biased toward basic and acidic residues. 721–728 (GPNASGKS) contacts ATP.

This sequence belongs to the DNA mismatch repair MutS family.

Its function is as follows. This protein is involved in the repair of mismatches in DNA. It is possible that it carries out the mismatch recognition step. This protein has a weak ATPase activity. This chain is DNA mismatch repair protein MutS, found in Synechococcus sp. (strain CC9902).